Reading from the N-terminus, the 487-residue chain is N-succinylglutamate 5-semialdehyde dehydrogenase (487 aa).

Residue 221-226 (GSSRTG) participates in NAD(+) binding. Active-site residues include glutamate 244 and cysteine 278.

Belongs to the aldehyde dehydrogenase family. AstD subfamily.

The catalysed reaction is N-succinyl-L-glutamate 5-semialdehyde + NAD(+) + H2O = N-succinyl-L-glutamate + NADH + 2 H(+). It functions in the pathway amino-acid degradation; L-arginine degradation via AST pathway; L-glutamate and succinate from L-arginine: step 4/5. Its function is as follows. Catalyzes the NAD-dependent reduction of succinylglutamate semialdehyde into succinylglutamate. The sequence is that of N-succinylglutamate 5-semialdehyde dehydrogenase from Ectopseudomonas mendocina (strain ymp) (Pseudomonas mendocina).